Reading from the N-terminus, the 121-residue chain is Oxalate-binding protein (121 aa).

One can recognise a Cupin type-2 domain in the interval 49-117 (RMKLPPGSSV…GNTDLEFLAV (69 aa)). Residues His-61, His-63, and Glu-68 each contribute to the Mn(2+) site. Residue Tyr-70 coordinates oxalate. His-102 contacts Mn(2+).

In terms of assembly, homodimer.

Its function is as follows. Binds oxalate. In Thermotoga maritima (strain ATCC 43589 / DSM 3109 / JCM 10099 / NBRC 100826 / MSB8), this protein is Oxalate-binding protein.